We begin with the raw amino-acid sequence, 397 residues long: Succinate--CoA ligase [ADP-forming] subunit beta (397 aa).

In terms of domain architecture, ATP-grasp spans 9-244 (KEIMKQYGIS…LTEEDPREVQ (236 aa)). Residues Lys46, 53–55 (GRG), Glu99, Leu102, and Glu107 each bind ATP. Mg(2+)-binding residues include Asn199 and Asp213. Substrate contacts are provided by residues Asn264 and 321–323 (GIM).

This sequence belongs to the succinate/malate CoA ligase beta subunit family. In terms of assembly, heterotetramer of two alpha and two beta subunits. Requires Mg(2+) as cofactor.

It carries out the reaction succinate + ATP + CoA = succinyl-CoA + ADP + phosphate. The enzyme catalyses GTP + succinate + CoA = succinyl-CoA + GDP + phosphate. It participates in carbohydrate metabolism; tricarboxylic acid cycle; succinate from succinyl-CoA (ligase route): step 1/1. Its function is as follows. Succinyl-CoA synthetase functions in the citric acid cycle (TCA), coupling the hydrolysis of succinyl-CoA to the synthesis of either ATP or GTP and thus represents the only step of substrate-level phosphorylation in the TCA. The beta subunit provides nucleotide specificity of the enzyme and binds the substrate succinate, while the binding sites for coenzyme A and phosphate are found in the alpha subunit. In Alkaliphilus metalliredigens (strain QYMF), this protein is Succinate--CoA ligase [ADP-forming] subunit beta.